A 289-amino-acid polypeptide reads, in one-letter code: Enoyl-CoA delta isomerase 1, mitochondrial (289 aa).

The transit peptide at 1–28 (MALAAARRLLLHAGSRLGRREAVDGARR) directs the protein to the mitochondrion. Lys48 is subject to N6-acetyllysine; alternate. Residue Lys48 is modified to N6-succinyllysine; alternate. Lys71 is subject to N6-succinyllysine. Position 76 is an N6-acetyllysine (Lys76). Residues 93–97 (AGLDL), Gly140, and Asn164 contribute to the substrate site. 4 positions are modified to N6-acetyllysine; alternate: Lys222, Lys229, Lys255, and Lys270. Residues Lys222, Lys229, Lys255, and Lys270 each carry the N6-succinyllysine; alternate modification. At Lys275 the chain carries N6-succinyllysine. Lys283 is modified (N6-acetyllysine; alternate). An N6-succinyllysine; alternate modification is found at Lys283.

This sequence belongs to the enoyl-CoA hydratase/isomerase family. Homotrimer.

It localises to the mitochondrion matrix. It catalyses the reaction a (3Z)-enoyl-CoA = a 4-saturated (2E)-enoyl-CoA. It carries out the reaction a (3E)-enoyl-CoA = a 4-saturated (2E)-enoyl-CoA. The catalysed reaction is (3Z)-octenoyl-CoA = (2E)-octenoyl-CoA. The enzyme catalyses (2E)-tetradecenoyl-CoA = (3Z)-tetradecenoyl-CoA. It catalyses the reaction (3Z)-dodecenoyl-CoA = (2E)-dodecenoyl-CoA. It carries out the reaction (3Z)-hexenoyl-CoA = (2E)-hexenoyl-CoA. The catalysed reaction is (3Z)-decenoyl-CoA = (2E)-decenoyl-CoA. It participates in lipid metabolism; fatty acid beta-oxidation. Its function is as follows. Key enzyme of fatty acid beta-oxidation. Able to isomerize both 3-cis (3Z) and 3-trans (3E) double bonds into the 2-trans (2E) form in a range of enoyl-CoA species, with a preference for (3Z)-enoyl-CoAs over (3E)-enoyl-CoAs. The catalytic efficiency of this enzyme is not affected by the fatty acyl chain length. The protein is Enoyl-CoA delta isomerase 1, mitochondrial of Mus musculus (Mouse).